Consider the following 141-residue polypeptide: Suppressor of RNA silencing (141 aa).

2 consecutive short sequence motifs (bipartite nuclear localization signal) follow at residues 75-91 (RKRV…QIRR) and 111-128 (KKKF…RFLR). The segment at 94–117 (AENMSATAKKSHNSKTSKKKFKED) is disordered. The span at 102–113 (KKSHNSKTSKKK) shows a compositional bias: basic residues.

It is found in the host cytoplasm. It localises to the host nucleus. Functionally, weak suppressor of RNA-mediated gene silencing, also known as post-transcriptional gene silencing (PTGS), a mechanism of plant viral defense that performs sequence-specific inhibition of viral mRNAs expression. This could be used by the virus to infect efficiently the host the meristem cells. This Tobacco rattle virus (isolate PpK20) (TRV) protein is Suppressor of RNA silencing.